Consider the following 640-residue polypeptide: Isoniazid-induced protein IniA (640 aa).

The chain crosses the membrane as a helical span at residues 497-519 (IGMLSSVVGLGLFNPLSVGAGLI). A coiled-coil region spans residues 560–628 (RDRLKMIQRL…QVNDNLAGLE (69 aa)).

Forms multimeric structures containing a central pore.

It localises to the cell membrane. Participates in the development of tolerance to both isoniazid and ethambutol. May function through a MDR-pump like mechanism, although it does not appear to directly transport isoniazid from the cell. This is Isoniazid-induced protein IniA (iniA) from Mycobacterium tuberculosis (strain CDC 1551 / Oshkosh).